We begin with the raw amino-acid sequence, 386 residues long: Probable protein phosphatase 2C 36 (386 aa).

In terms of domain architecture, PPM-type phosphatase spans 60–363; that stretch reads ELSVAVVQGN…DDITVIVLFI (304 aa). Mn(2+) contacts are provided by aspartate 94, glycine 95, aspartate 295, and aspartate 354.

This sequence belongs to the PP2C family. Mg(2+) serves as cofactor. It depends on Mn(2+) as a cofactor.

The catalysed reaction is O-phospho-L-seryl-[protein] + H2O = L-seryl-[protein] + phosphate. The enzyme catalyses O-phospho-L-threonyl-[protein] + H2O = L-threonyl-[protein] + phosphate. The chain is Probable protein phosphatase 2C 36 from Oryza sativa subsp. japonica (Rice).